The primary structure comprises 1059 residues: Ubiquitin carboxyl-terminal hydrolase 36 (1059 aa).

Disordered stretches follow at residues 22–45 (LGGN…NGSL) and 102–145 (GKLV…KPKR). Over residues 23-45 (GGNSSAGSSTDQAKSGEDTNGSL) the composition is skewed to polar residues. Positions 121–138 (HPNNQSHHNHPHPTSNPN) are enriched in low complexity. The 290-residue stretch at 168–457 (TGMINVGNTC…NAYIMFFELD (290 aa)) folds into the USP domain. C177 (nucleophile) is an active-site residue. Residue H416 is the Proton acceptor of the active site. Disordered regions lie at residues 464 to 512 (PPAN…YTNG), 554 to 853 (ATSA…VTSN), 941 to 1005 (RQRD…FYNQ), and 1022 to 1059 (FGGA…QQQT). Low complexity-rich tracts occupy residues 479 to 494 (STTP…PSPT) and 561 to 580 (NGNK…KSIN). 2 positions are modified to phosphoserine: S490 and S492. A compositionally biased stretch (polar residues) spans 603 to 615 (TTAQLPSMPNMTE). 2 positions are modified to phosphothreonine: T632 and T636. Residues S646 and S648 each carry the phosphoserine modification. The span at 673–702 (ESGQTNGHSKTNGSLTNGSASSSVHVNNSK) shows a compositional bias: polar residues. Positions 703 to 720 (QKTDAIDEIFKSLKKSAD) are enriched in basic and acidic residues. S721 is subject to Phosphoserine. Acidic residues predominate over residues 721–730 (SEEDDDEEEP). Over residues 740-750 (PQKQSQSQSKA) the composition is skewed to low complexity. Residues 751–760 (PPSPKTPPSP) are compositionally biased toward pro residues. A Phosphoserine modification is found at S753. Position 756 is a phosphothreonine (T756). Position 759 is a phosphoserine (S759). Positions 779 to 788 (DAIDDDDDAV) are enriched in acidic residues. T799 is modified (phosphothreonine). Residues 806–818 (NPFSSSKPSTDSP) show a composition bias toward polar residues. A Phosphoserine modification is found at S817. The residue at position 820 (T820) is a Phosphothreonine. Residues 833–853 (ALKSHQQPRVGNGYQSNVTSN) are compositionally biased toward polar residues. Residues 963–974 (SGSAKGNNASNS) show a composition bias toward low complexity.

The protein belongs to the peptidase C19 family. As to quaternary structure, interacts with atms/PAF1, but not with CycT.

The protein localises to the nucleus. It is found in the nucleolus. It carries out the reaction Thiol-dependent hydrolysis of ester, thioester, amide, peptide and isopeptide bonds formed by the C-terminal Gly of ubiquitin (a 76-residue protein attached to proteins as an intracellular targeting signal).. Functionally, required for maintaining multiple types of adult stem cells, including male and female germline, epithelial follicle cell and intestinal stem cells. May function as a transcriptional repressor by continually deubiquiting histone H2B at the promoters of genes critical for cellular differentiation, thereby preventing histone H3 'Lys-4' trimethylation (H3K4). Controls selective autophagy activation by ubiquitinated proteins. This Drosophila sechellia (Fruit fly) protein is Ubiquitin carboxyl-terminal hydrolase 36 (Usp36).